Here is a 247-residue protein sequence, read N- to C-terminus: Granulin (247 aa).

It belongs to the polyhedrin family.

Its function is as follows. Component of the virus occlusion bodies, which are large proteinaceous structures, that protect the virus from the outside environment for extended periods until they are ingested by insect larvae. The protein is Granulin of Pieris brassicae granulosis virus (PbGV).